The following is a 126-amino-acid chain: uncharacterized protein (126 aa).

Disordered stretches follow at residues 15–72 (PEWG…SDPQ) and 93–126 (TQIPEASDSQAAQKPQAHRQIPETTEAGRETTSN). 2 stretches are compositionally biased toward basic and acidic residues: residues 29–46 (DPLDRRLQNLRDRERVPE) and 55–64 (VQEDSREHGQ).

This is an uncharacterized protein from Homo sapiens (Human).